Reading from the N-terminus, the 191-residue chain is MGQIEWAMWANEQALASGLILITGGIVATAGQFTQWYLGAYSIAAGVLVCLLEYPRGKRSKGSTMERCGQKYLTRVVKLFGPLTRNYYIRAFLHLGLAVPAGFLLATILGTACLAIASGIYLLAAIRGEQWSPIEPKPKERPQIGGTIKQPPSNPPPRPPAEARKKPSEEAAGVPTGGPQENPMPVNDEVV.

Residues 2–7 lie on the Cytoplasmic side of the membrane; the sequence is GQIEWA. The helical transmembrane segment at 8–30 threads the bilayer; it reads MWANEQALASGLILITGGIVATA. The Extracellular portion of the chain corresponds to 31–35; the sequence is GQFTQ. The chain crosses the membrane as a helical span at residues 36 to 53; it reads WYLGAYSIAAGVLVCLLE. At 54–69 the chain is on the cytoplasmic side; the sequence is YPRGKRSKGSTMERCG. An intramembrane segment occupies 70-80; the sequence is QKYLTRVVKLF. Topologically, residues 81–86 are cytoplasmic; it reads GPLTRN. Residues 87-104 form a helical membrane-spanning segment; sequence YYIRAFLHLGLAVPAGFL. Position 105 (Leu-105) is a topological domain, extracellular. The helical transmembrane segment at 106-126 threads the bilayer; sequence ATILGTACLAIASGIYLLAAI. The Cytoplasmic segment spans residues 127–191; it reads RGEQWSPIEP…NPMPVNDEVV (65 aa). The interval 134 to 191 is disordered; it reads IEPKPKERPQIGGTIKQPPSNPPPRPPAEARKKPSEEAAGVPTGGPQENPMPVNDEVV. Phosphothreonine is present on Thr-147. Residue Lys-149 forms a Glycyl lysine isopeptide (Lys-Gly) (interchain with G-Cter in ubiquitin) linkage. Residue Ser-168 is modified to Phosphoserine.

It belongs to the p22phox family. As to quaternary structure, component of the phagocyte NADPH oxidase core complex/cytochrome b558 complex, composed of CYBB (heavy chain (beta)) and CYBA (light chain (alpha)). Component of the phagocyte NADPH oxidase complex composed of an obligatory core heterodimer formed by the membrane proteins CYBA and CYBB and the cytosolic regulatory subunits NCF1/p47-phox, NCF2/p67-phox, NCF4/p40-phox and the small GTPase RAC1 or RAC2. Interacts with NCF1 (via SH3 domain). Interacts with SH3PXD2A. Interacts with DUOX1, DUOX2 and TPO. Interacts with NOX4; this interaction mediates superoxide generation. Interacts with calprotectin (S100A8/9). Interacts with GBP7. Interacts with NOXO1. Forms a heterodimer with NOX3 and is essential for activity and cell membrane localization of NOX3. Interacts with NOX1. In terms of processing, phosphorylation at Thr-147 enhances NADPH oxidase activity by promoting NCF1/p47-phox binding. Post-translationally, ubiquitinated at Lys-149 likely by RNF145.

Its subcellular location is the cell membrane. Functionally, subunit of NADPH oxidase complexes that is required for the NADPH oxidase activity that generates, in various cell types, superoxide from molecular oxygen utilizing NADPH as an electron donor. Subunit of the phagocyte NADPH oxidase complex that mediates the transfer of electrons from cytosolic NADPH to O2 to produce the superoxide anion (O2(-)). In the activated complex, electrons are first transferred from NADPH to flavin adenine dinucleotide (FAD) and subsequently transferred via two heme molecules to molecular oxygen, producing superoxide through an outer-sphere reaction. Activation of the NADPH oxidase complex is initiated by the assembly of cytosolic subunits of the NADPH oxidase complex with the core NADPH oxidase complex to form a complex at the plasma membrane or phagosomal membrane. This activation process is initiated by phosphorylation dependent binding of the cytosolic NCF1/p47-phox subunit to the C-terminus of CYBA/p22-phox. Aassociates with NOX3 to form a functional NADPH oxidase constitutively generating superoxide. The protein is Cytochrome b-245 light chain of Bos taurus (Bovine).